We begin with the raw amino-acid sequence, 611 residues long: Rho-related BTB domain-containing protein 3 (611 aa).

Residues 1-175 form a rho-like region; it reads MSIHIVALGN…KELGATYLEL (175 aa). BTB domains are found at residues 254–356 and 420–487; these read VDVV…QWEE and ADVV…CPAG. Positions 420 to 611 are interaction with Rab9; that stretch reads ADVVFEIQGT…HSRKCRCLVM (192 aa).

Interacts with RAB9A and RAB9B (at lower level compared to RAB9A-binding). Interacts with M6PRBP1/TIP47. In terms of tissue distribution, ubiquitous. Highly expressed in neural and cardiac tissues, pancreas, placenta and testis.

Its subcellular location is the golgi apparatus. Functionally, rab9-regulated ATPase required for endosome to Golgi transport. Involved in transport vesicle docking at the Golgi complex, possibly by participating in release M6PRBP1/TIP47 from vesicles to permit their efficient docking and fusion at the Golgi. Specifically binds Rab9, but not other Rab proteins. Has low intrinsic ATPase activity due to autoinhibition, which is relieved by Rab9. The polypeptide is Rho-related BTB domain-containing protein 3 (RHOBTB3) (Homo sapiens (Human)).